The following is a 356-amino-acid chain: MFEAIIYNISVMVAGIYLFHRLQYSENKRMIFSKEYVTVLMTFVSLLLAAYPIPFQNEYLVHLTFVPLLFLGRYTNMIYTLTAAFIVSLVDVFIFGNSIIYGITLIVIAGIVSAVGPFLKQNDIISLLILNLISIIILLFLALLSPIYELVEILVLIPISFIITIASAITFVDIWHFFSLVNRYENEDKYDYLTGLGNVKEFDRHLNEVSSKAEEKKQSLALLLIDIDGFKDVNDHYSHQSGDAVLKQMSQLLKNYVPNQFKIFRNGGEEFSVVIRDYTLDQSVKLAENIRSGVEKSSFHLPNKEVIKLSVSIGVGYLTQEDRKSQRKVFKDADDMVHVAKSEGRNKVMFNPIVKL.

Helical transmembrane passes span 2-22 (FEAI…FHRL), 35-55 (EYVT…PIPF), 76-96 (NMIY…FIFG), 99-119 (IIYG…GPFL), 124-144 (IISL…LALL), and 151-171 (VEIL…AITF). A GGDEF domain is found at 218–353 (QSLALLLIDI…GRNKVMFNPI (136 aa)).

Its subcellular location is the cell membrane. This is an uncharacterized protein from Staphylococcus epidermidis (strain ATCC 35984 / DSM 28319 / BCRC 17069 / CCUG 31568 / BM 3577 / RP62A).